The sequence spans 1299 residues: Cilia- and flagella-associated protein 251 (1299 aa).

The interval 1 to 351 (MSDTEENPLE…SQKPEDILAQ (351 aa)) is disordered. 3 stretches are compositionally biased toward acidic residues: residues 17–45 (EMEE…EEEE), 91–162 (EKEE…EEDA), and 176–189 (ESQE…EWVE). Residues 190-199 (KEEQREGEEV) show a composition bias toward basic and acidic residues. Acidic residues predominate over residues 212–228 (EEEGWEEEKSGEEEKSE). The segment covering 229–257 (ESERSKERGGEEEGQEKEEAEHEGEREEG) has biased composition (basic and acidic residues). Positions 269 to 280 (REEEEEEEDTET) are enriched in acidic residues. 2 stretches are compositionally biased toward basic and acidic residues: residues 281–297 (TETK…EKQN) and 331–351 (NSMK…ILAQ). 14 WD repeats span residues 484 to 526 (PVHT…IWKW), 534 to 574 (ACTL…CWFE), 585 to 624 (VLTE…VWDI), 643 to 678 (PRKL…FYDH), 681 to 741 (SVVN…VYHM), 745 to 785 (GTKL…VWDF), 791 to 828 (LFSR…ILDA), 838 to 874 (PFKY…MVVV), 881 to 924 (WEYL…EYNL), 935 to 975 (LDVH…LFNA), 981 to 1027 (RKTL…ILPV), 1033 to 1071 (KTCA…QWKI), 1109 to 1149 (YFYY…FYPS), and 1169 to 1209 (GKLI…GYTN).

The protein localises to the cytoplasm. Its subcellular location is the cytoskeleton. It is found in the cilium axoneme. It localises to the cell projection. The protein resides in the cilium. The protein localises to the flagellum. In terms of biological role, involved in spermatozoa motility. May also regulate cilium motility through its role in the assembly of the axonemal radial spokes. The chain is Cilia- and flagella-associated protein 251 from Mus musculus (Mouse).